A 387-amino-acid polypeptide reads, in one-letter code: Glucose-1-phosphate adenylyltransferase (387 aa).

Alpha-D-glucose 1-phosphate contacts are provided by residues Tyr-99, Gly-164, 179–180, and Ser-190; that span reads EK.

The protein belongs to the bacterial/plant glucose-1-phosphate adenylyltransferase family. Homotetramer.

It catalyses the reaction alpha-D-glucose 1-phosphate + ATP + H(+) = ADP-alpha-D-glucose + diphosphate. The protein operates within glycan biosynthesis; glycogen biosynthesis. Functionally, involved in the biosynthesis of ADP-glucose, a building block required for the elongation reactions to produce glycogen. Catalyzes the reaction between ATP and alpha-D-glucose 1-phosphate (G1P) to produce pyrophosphate and ADP-Glc. The protein is Glucose-1-phosphate adenylyltransferase of Geobacillus stearothermophilus (Bacillus stearothermophilus).